The following is a 359-amino-acid chain: GATA-binding factor 1-A (359 aa).

The disordered stretch occupies residues 1–21 (MDYTTLTTQDPDPNYTESGLA). 2 GATA-type zinc fingers span residues 178-202 (CVNCGATVTPLWRRDMSGHYLCNAC) and 232-256 (CSNCHTSTTTLWRRNASGDPVCNAC). Disordered stretches follow at residues 271-311 (MKKE…SPYP) and 323-359 (PMGHMINPPHHFLQSPRISHSAPAVSYRQAASGVTPP). The span at 279–291 (RNRKVSSRSKKKK) shows a compositional bias: basic residues.

As to expression, expressed in the developing ventral blood island, and in both tadpole and adult erythrocytes.

It is found in the nucleus. Its function is as follows. Transcription factor that acts synergistically with tal1/scl and lmo2 to specify embryonic dorsal mesoderm to a hematopoietic fate. This Xenopus laevis (African clawed frog) protein is GATA-binding factor 1-A (gata1-a).